Consider the following 1133-residue polypeptide: Envelopment polyprotein (1133 aa).

The signal sequence occupies residues 1–17; it reads MWSLLLLAALVGQGFAL. The Lumenal segment spans residues 18 to 484; sequence KNVFDMRIQC…PGFHGWATAA (467 aa). 11 disulfide bridges follow: cysteine 27/cysteine 149, cysteine 61/cysteine 155, cysteine 107/cysteine 126, cysteine 131/cysteine 136, cysteine 173/cysteine 183, cysteine 208/cysteine 245, cysteine 232/cysteine 349, cysteine 374/cysteine 433, cysteine 378/cysteine 387, cysteine 403/cysteine 422, and cysteine 450/cysteine 473. N-linked (GlcNAc...) asparagine; by host glycosylation occurs at asparagine 132. 2 N-linked (GlcNAc...) asparagine; by host glycosylation sites follow: asparagine 233 and asparagine 345. A glycan (N-linked (GlcNAc...) asparagine; by host) is linked at asparagine 397. A helical membrane pass occupies residues 485 to 504; it reads LLITFCFGWVLIPACTLAIL. At 505–626 the chain is on the cytoplasmic side; the sequence is LVLKFFANIL…NLFRYKSRCY (122 aa). Residues 514-531 form a binding to the ribonucleoprotein region; it reads LHTSNQENRFKAILRKIK. 2 consecutive CCHC-type zinc fingers follow at residues 543–563 and 568–589; these read CEIC…NLSC and CPYC…YKVC. 3 binding to the ribonucleoprotein regions span residues 586–603, 590–601, and 609–623; these read YKVC…KKTV, QATHRFREDLKK, and GPGC…RYKS. Positions 609–632 constitute an ITAM domain; it reads GPGCYRTLNLFRYKSRCYILTMWT. A YxxL motif is present at residues 613–616; that stretch reads YRTL. A helical transmembrane segment spans residues 627–647; sequence ILTMWTLLLIIESILWAASAA. The Lumenal segment spans residues 648-1104; the sequence is EIPLVPLWTD…WVMGIINGNW (457 aa). 8 cysteine pairs are disulfide-bonded: cysteine 733–cysteine 768, cysteine 737–cysteine 775, cysteine 749–cysteine 883, cysteine 763–cysteine 894, cysteine 778–cysteine 902, cysteine 804–cysteine 813, cysteine 821–cysteine 830, and cysteine 861–cysteine 865. The segment at 755–775 is fusion loop; sequence YEYENSWACNPPDCPGVGTGC. An N-linked (GlcNAc...) asparagine; by host glycan is attached at asparagine 926. 5 disulfides stabilise this stretch: cysteine 968-cysteine 998, cysteine 991-cysteine 1043, cysteine 1008-cysteine 1013, cysteine 1044-cysteine 1049, and cysteine 1083-cysteine 1087. Residues 1105-1125 traverse the membrane as a helical segment; the sequence is VVLIVLCVLLLFSLILLSILC. Residues 1120–1133 form a binding to the ribonucleoprotein region; that stretch reads LLSILCPVRKHKKS. The Cytoplasmic segment spans residues 1126-1133; it reads PVRKHKKS.

Belongs to the hantavirus envelope glycoprotein family. Homodimer. Homotetramer; forms heterotetrameric Gn-Gc spikes in the pre-fusion conformation. Interacts (via C-terminus) with the nucleoprotein. Interacts with host TUFM; this interaction contributes to the virus-induced degradation of mitochondria by autophagy, which leads to degradation of host MAVS and inhibition of type I interferon (IFN) responses. Interacts with host MAP1LC3B; this interaction contributes to the virus-induced degradation of mitochondria by autophagy, which leads to degradation of host MAVS and inhibition of type I interferon (IFN) responses. In terms of assembly, homodimer. Homotetramer; forms heterotetrameric Gn-Gc spikes in the pre-fusion conformation. Homotrimer; forms homotrimer in the post-fusion conformation at acidic pH. Interacts (via C-terminus) with the nucleoprotein. Envelope polyprotein precursor is quickly cleaved in vivo just after synthesis, presumably by host signal peptidase.

It localises to the virion membrane. Its subcellular location is the host cell surface. It is found in the host Golgi apparatus membrane. The protein resides in the host endoplasmic reticulum membrane. The protein localises to the host mitochondrion. Functionally, forms homotetramers with glycoprotein C at the surface of the virion. Attaches the virion to host cell receptors including integrin ITGAV/ITGB3. This attachment induces virion internalization predominantly through clathrin-dependent endocytosis. Mediates the assembly and budding of infectious virus particles through its interaction with the nucleocapsid protein and the viral genome. May dysregulate normal immune and endothelial cell responses through an ITAM motif. Translocates to mitochondria, binds to host TUFM and recruits MAP1LC3B. These interactions induce mitochondrial autophagy and therefore destruction of host MAVS leading to inhibition of type I interferon (IFN) responses. Concomitant breakdown of glycoprotein N is apparently prevented by the nucleoprotein that may inhibit Gn-stimulated autophagosome-lysosome fusion. Interacts with the viral genomic RNA. Forms homotetramers with glycoprotein N at the surface of the virion. Attaches the virion to host cell receptors including integrin ITGAV/ITGB3. This attachment induces virion internalization predominantly through clathrin-dependent endocytosis. Class II fusion protein that promotes fusion of viral membrane with host endosomal membrane after endocytosis of the virion. The sequence is that of Envelopment polyprotein (GP) from Homo sapiens (Human).